The sequence spans 696 residues: MKAPIPHLILLYATFTQSLKVVTKRGSADGCTDWSVDIKKYQVLVGEPVRIKCALFYGYIRTNYTLAQSAGLSLMWYKSSGPGDFEEPIAFDGSRMSKEEDSIWFRPTLLQDSGLYACVIRNSTYCMKVSISLTVGENDTGLCYNSKMKYFEKAELSKSKEISCRDIEDFLLPTREPEILWYKECRTKTWRPSIVFKRDTLLIKEVKEDDIGNYTCELKYGGFVVRRTTELTVTAPLTDKPPKLLYPMESKLTIQETQLGGSANLTCRAFFGYSGDVSPLIYWMKGEKFIEDLDENRVWESDIRILKEHLGEQEVSISLIVDSVEEGDLGNYSCYVENGNGRRHASVLLHKRELMYTVELAGGLGAILLLLVCSVTIYKCYKIEIMLFYRNHFGAEELDGDNKDYDAYLSYTKVDPDQWNQETGEEERFALEILPDMLEKHYGYKLFIPDRDLIPTGTYIEDVARCVDQSKRLIIVMTPNYVVRRGWSIFELETRLRNMLVTGEIKVILIECSELRGIMNYQEVEALKHTIKLLTVIKWHGPKCNKLNSKFWKRLQYEMPFKRIEPITHEQALDVSEQGPFGELQTVSAISMAAATSTALATAHPDLRSTFHNTYHSQMRQKHYYRSYEYDVPPTGTLPLTSIGNQHTYCNIPMTLINGQRPQTKSSREPNPDEAHTNSAILPLLARETSISSVIW.

Residues 1-24 form the signal peptide; that stretch reads MKAPIPHLILLYATFTQSLKVVTK. An Ig-like C2-type 1 domain is found at 25-134; that stretch reads RGSADGCTDW…YCMKVSISLT (110 aa). Residues 25–357 lie on the Extracellular side of the membrane; it reads RGSADGCTDW…LLHKRELMYT (333 aa). Intrachain disulfides connect cysteine 31-cysteine 126 and cysteine 53-cysteine 118. N-linked (GlcNAc...) asparagine glycosylation is found at asparagine 63, asparagine 122, and asparagine 138. Intrachain disulfides connect cysteine 143–cysteine 185 and cysteine 164–cysteine 216. 2 Ig-like C2-type domains span residues 143–232 and 242–350; these read CYNS…TELT and PKLL…VLLH. N-linked (GlcNAc...) asparagine glycosylation is found at asparagine 213, asparagine 264, and asparagine 331. An intrachain disulfide couples cysteine 267 to cysteine 334. The helical transmembrane segment at 358 to 378 threads the bilayer; that stretch reads VELAGGLGAILLLLVCSVTIY. At 379-696 the chain is on the cytoplasmic side; it reads KCYKIEIMLF…RETSISSVIW (318 aa). The 157-residue stretch at 403-559 folds into the TIR domain; that stretch reads KDYDAYLSYT…KFWKRLQYEM (157 aa). Glutamate 491 is an active-site residue. The segment at 549–644 is interaction with NCS1; the sequence is SKFWKRLQYE…TGTLPLTSIG (96 aa). The segment at 659 to 680 is disordered; that stretch reads GQRPQTKSSREPNPDEAHTNSA. Residues 666–676 show a composition bias toward basic and acidic residues; sequence SSREPNPDEAH.

It belongs to the interleukin-1 receptor family. In terms of assembly, homodimer. Interacts (calcium-independent) with NCS1/FREQ. Interacts (via the first immunoglobilin domain) with PTPRD (via the second immunoglobilin domain); this interaction is PTPRD-splicing-dependent and induces pre- and post-synaptic differentiation of neurons and is required for IL1RAPL1-mediated synapse formation.

The protein localises to the cell membrane. It is found in the cytoplasm. The protein resides in the cell projection. Its subcellular location is the axon. It localises to the dendrite. It carries out the reaction NAD(+) + H2O = ADP-D-ribose + nicotinamide + H(+). May regulate secretion and presynaptic differentiation through inhibition of the activity of N-type voltage-gated calcium channel. May activate the MAP kinase JNK. Plays a role in neurite outgrowth. During dendritic spine formation can bidirectionally induce pre- and post-synaptic differentiation of neurons by trans-synaptically binding to PTPRD. In Rattus norvegicus (Rat), this protein is Interleukin-1 receptor accessory protein-like 1 (Il1rapl1).